Here is a 598-residue protein sequence, read N- to C-terminus: Torsin-1A-interacting protein 1 (598 aa).

The Nuclear segment spans residues 1-351 (MAGEGRRAEA…PQNASFVKRN (351 aa)). Disordered stretches follow at residues 19 to 254 (VTPR…RSSS) and 267 to 314 (QNFT…IYGS). The residue at position 60 (Ser-60) is a Phosphoserine. 2 stretches are compositionally biased toward basic and acidic residues: residues 73 to 101 (LVDK…EVRE) and 115 to 124 (RPQEAEEMKT). Phosphoserine is present on residues Ser-135, Ser-143, Ser-154, Ser-156, Ser-157, and Ser-187. A compositionally biased stretch (polar residues) spans 205 to 214 (EATSVQQKVN). The residue at position 216 (Ser-216) is a Phosphoserine. A Phosphothreonine modification is found at Thr-221. Phosphoserine occurs at positions 227, 230, and 242. Over residues 238–250 (RSRDSDESGDKTT) the composition is skewed to basic and acidic residues. Polar residues-rich tracts occupy residues 277 to 287 (SVLSSGYQKTP) and 300 to 313 (RMQT…SIYG). Ser-320 carries the phosphoserine modification. The tract at residues 322–341 (LKSELGNQSPSTSSQQVTGQ) is disordered. Lys-323 participates in a covalent cross-link: Glycyl lysine isopeptide (Lys-Gly) (interchain with G-Cter in SUMO2). Positions 326–341 (LGNQSPSTSSQQVTGQ) are enriched in polar residues. The residue at position 330 (Ser-330) is a Phosphoserine. A helical transmembrane segment spans residues 352–372 (WWWLLPLIAALASGSFWFFST). Positions 371-598 (STPEVETTAV…ENALKRGICL (228 aa)) are interaction with TOR1A. Residues 373–598 (PEVETTAVQE…ENALKRGICL (226 aa)) lie on the Perinuclear space side of the membrane. Residues 374–450 (EVETTAVQEF…SEQIADAYSS (77 aa)) are a coiled coil. An N-linked (GlcNAc...) asparagine glycan is attached at Asn-414.

This sequence belongs to the TOR1AIP family. Interacts with ATP1B4. Interacts with TOR1A (ATP-bound). Interacts with TOR1B, TOR2A and TOR3A.

It is found in the nucleus inner membrane. Required for nuclear membrane integrity. Induces TOR1A and TOR1B ATPase activity and is required for their location on the nuclear membrane. Binds to A- and B-type lamins. Possible role in membrane attachment and assembly of the nuclear lamina. The chain is Torsin-1A-interacting protein 1 (TOR1AIP1) from Pongo abelii (Sumatran orangutan).